An 802-amino-acid polypeptide reads, in one-letter code: DSC E3 ubiquitin ligase complex subunit A (802 aa).

An N-terminal signal peptide occupies residues 1–22 (MDNRGSFFFLLIVFYLLLSSQS). Topologically, residues 23 to 381 (RPPLLDQDRE…TGPKIEEYDK (359 aa)) are lumenal. N-linked (GlcNAc...) asparagine glycosylation is found at Asn-48, Asn-71, Asn-115, Asn-126, Asn-148, and Asn-166. Residues 382-402 (YSARLVFIICGVFAAQITLLL) traverse the membrane as a helical segment. Over 403 to 429 (RQIKEASTPSTRSRISFYTIALMAFGD) the chain is Cytoplasmic. A helical transmembrane segment spans residues 430–450 (AFVLIFILLELYPAVSFLVMA). Residues 451 to 453 (TAA) lie on the Lumenal side of the membrane. Residues 454-474 (FLTFLSVSYIGMKFMMEIWAV) form a helical membrane-spanning segment. Residues 475–550 (QAPERREQER…QETRNDVGAM (76 aa)) lie on the Cytoplasmic side of the membrane. The segment at 478-541 (ERREQERRSN…TNRGTTSAAQ (64 aa)) is disordered. The segment covering 532–541 (TNRGTTSAAQ) has biased composition (polar residues). Residues 551-571 (YARFYFVLFVMLIISIWSFLW) form a helical membrane-spanning segment. Topologically, residues 572-574 (PNR) are lumenal. The helical transmembrane segment at 575–595 (LGALYARALAFVYLSFWTPQI) threads the bilayer. Residues 596-608 (GRNIIRNCRKALR) lie on the Cytoplasmic side of the membrane. A helical transmembrane segment spans residues 609-629 (WDFVIGQSILRLFPFVYFLTV). The Lumenal portion of the chain corresponds to 630 to 642 (RGNVLFIHPDTTT). The chain crosses the membrane as a helical span at residues 643-663 (AFALAGWVWIQVWVLASQDIL). Topologically, residues 664 to 802 (GPRFFVPRGW…PICRESIPPV (139 aa)) are cytoplasmic. The RING-type; atypical zinc finger occupies 732-796 (CAICMQEIEV…RLRLQCPICR (65 aa)).

In terms of assembly, component of the DSC E3 ubiquitin ligase complex composed of dscA, dscB, dscC and dscD.

The protein localises to the endoplasmic reticulum membrane. The catalysed reaction is S-ubiquitinyl-[E2 ubiquitin-conjugating enzyme]-L-cysteine + [acceptor protein]-L-lysine = [E2 ubiquitin-conjugating enzyme]-L-cysteine + N(6)-ubiquitinyl-[acceptor protein]-L-lysine.. The protein operates within protein modification; protein ubiquitination. Its function is as follows. Catalytic component of the DSC E3 ubiquitin ligase complex which is required for the srbA transcriptional activator proteolytic cleavage to release the soluble transcription factor from the membrane in low oxygen or sterol conditions. Required for growth during hypoxia and triazole drug susceptibility, as well as for virulence in a murine model of invasive pulmonary aspergillosis (IPA). The sequence is that of DSC E3 ubiquitin ligase complex subunit A from Aspergillus fumigatus (strain CBS 144.89 / FGSC A1163 / CEA10) (Neosartorya fumigata).